Here is a 305-residue protein sequence, read N- to C-terminus: Glycine--tRNA ligase alpha subunit (305 aa).

This sequence belongs to the class-II aminoacyl-tRNA synthetase family. As to quaternary structure, tetramer of two alpha and two beta subunits.

It localises to the cytoplasm. The catalysed reaction is tRNA(Gly) + glycine + ATP = glycyl-tRNA(Gly) + AMP + diphosphate. This chain is Glycine--tRNA ligase alpha subunit, found in Streptococcus pneumoniae (strain P1031).